The primary structure comprises 80 residues: Serine rich endogenous peptide 15 (80 aa).

Positions 1–28 (MSKEKSYVIALLLSLLLCLSFQVGVSEA) are cleaved as a signal peptide. 2 consecutive short sequence motifs (SCOOP motif) follow at residues 32–46 (AVTTRYSDSPRCANG) and 66–80 (PRVAVHSNSTKGKGP). The interval 37-80 (YSDSPRCANGSSASPPTRHCPRGRPRPPTPRVAVHSNSTKGKGP) is disordered. 2 consecutive short sequence motifs (sxS motif essential for MIK2 binding) follow at residues 38–40 (SDS) and 72–74 (SNS). Positions 71–80 (HSNSTKGKGP) are enriched in polar residues.

Belongs to the serine rich endogenous peptide (SCOOP) phytocytokine family. Interacts with MIK2 (via extracellular leucine-rich repeat domain); this interaction triggers the formation of complex between MIK2 and the BAK1/SERK3 and SERK4 coreceptors, and subsequent BAK1 activation by phosphorylation. In terms of tissue distribution, mostly expressed in leaves, and, to a lower extent, in seedlings shoots, roots, stems, siliques, seeds and flowers.

The protein resides in the cell membrane. The protein localises to the secreted. Its subcellular location is the extracellular space. It localises to the apoplast. It is found in the endoplasmic reticulum. The protein resides in the golgi apparatus. Functionally, brassicaceae-specific phytocytokine (plant endogenous peptide released into the apoplast) perceived by MIK2 in a BAK1/SERK3 and SERK4 coreceptors-dependent manner, that modulates various physiological and antimicrobial processes including growth prevention and reactive oxygen species (ROS) response regulation. Inhibits root growth. This chain is Serine rich endogenous peptide 15, found in Arabidopsis thaliana (Mouse-ear cress).